We begin with the raw amino-acid sequence, 48 residues long: ATP synthase protein 8 (48 aa).

Residues 12-32 (LLTFGMLAISMLLYLVSTIIL) traverse the membrane as a helical segment.

Belongs to the ATPase protein 8 family. F-type ATPases have 2 components, CF(1) - the catalytic core - and CF(0) - the membrane proton channel.

The protein resides in the mitochondrion membrane. Mitochondrial membrane ATP synthase (F(1)F(0) ATP synthase or Complex V) produces ATP from ADP in the presence of a proton gradient across the membrane which is generated by electron transport complexes of the respiratory chain. F-type ATPases consist of two structural domains, F(1) - containing the extramembraneous catalytic core and F(0) - containing the membrane proton channel, linked together by a central stalk and a peripheral stalk. During catalysis, ATP synthesis in the catalytic domain of F(1) is coupled via a rotary mechanism of the central stalk subunits to proton translocation. Part of the complex F(0) domain. Minor subunit located with subunit a in the membrane. In Debaryomyces hansenii (strain ATCC 36239 / CBS 767 / BCRC 21394 / JCM 1990 / NBRC 0083 / IGC 2968) (Yeast), this protein is ATP synthase protein 8 (ATP8).